Reading from the N-terminus, the 429-residue chain is L-threonine dehydratase biosynthetic IlvA (429 aa).

Lysine 66 carries the N6-(pyridoxal phosphate)lysine modification. Pyridoxal 5'-phosphate is bound by residues asparagine 93, 196–200 (GGGGC), and serine 322. The region spanning 346–420 (HYFLVDFPQE…TDIHVEALEP (75 aa)) is the ACT-like domain.

This sequence belongs to the serine/threonine dehydratase family. As to quaternary structure, homotetramer. It depends on pyridoxal 5'-phosphate as a cofactor.

The catalysed reaction is L-threonine = 2-oxobutanoate + NH4(+). The protein operates within amino-acid biosynthesis; L-isoleucine biosynthesis; 2-oxobutanoate from L-threonine: step 1/1. Its function is as follows. Catalyzes the anaerobic formation of alpha-ketobutyrate and ammonia from threonine in a two-step reaction. The first step involved a dehydration of threonine and a production of enamine intermediates (aminocrotonate), which tautomerizes to its imine form (iminobutyrate). Both intermediates are unstable and short-lived. The second step is the nonenzymatic hydrolysis of the enamine/imine intermediates to form 2-ketobutyrate and free ammonia. In the low water environment of the cell, the second step is accelerated by RidA. This Mycobacterium bovis (strain ATCC BAA-935 / AF2122/97) protein is L-threonine dehydratase biosynthetic IlvA (ilvA).